We begin with the raw amino-acid sequence, 371 residues long: uncharacterized protein (371 aa).

Belongs to the serpin family.

This is an uncharacterized protein from Pyrobaculum aerophilum (strain ATCC 51768 / DSM 7523 / JCM 9630 / CIP 104966 / NBRC 100827 / IM2).